The following is a 224-amino-acid chain: Giant hemoglobin linker AV-1 chain (224 aa).

In terms of domain architecture, LDL-receptor class A spans 62–103 (HWCPSKYHRCGNSPQCMSNMAFCDGVNDCKNHFDEDENRCVV). Disulfide bonds link cysteine 64–cysteine 77, cysteine 71–cysteine 90, and cysteine 84–cysteine 101. N-linked (GlcNAc...) asparagine glycosylation occurs at asparagine 108.

As to quaternary structure, giant hemoglobin is composed of four heme-containing chains (AI to AIV), and two linker chains (AV and AVI).

Functionally, acts as a linker for the assembly of heme-containing chains in the construction of giant hemoglobin. The sequence is that of Giant hemoglobin linker AV-1 chain from Lamellibrachia sp. (Deep-sea giant tube worm).